The chain runs to 400 residues: Peptidase M20 domain-containing protein C757.05c (400 aa).

The N-terminal stretch at 1–25 (MTMKISVWSLLIVIGYHLWMSPVLA) is a signal peptide. N-linked (GlcNAc...) asparagine glycosylation occurs at N80. D152 contacts Zn(2+). The Proton acceptor role is filled by E186. E187 is a binding site for Zn(2+).

The protein belongs to the peptidase M20A family. Zn(2+) serves as cofactor.

It localises to the secreted. The protein is Peptidase M20 domain-containing protein C757.05c of Schizosaccharomyces pombe (strain 972 / ATCC 24843) (Fission yeast).